The chain runs to 261 residues: Type III pantothenate kinase (261 aa).

An ATP-binding site is contributed by 7-14; it reads EQGNTNTM. Residue 108–111 participates in substrate binding; it reads GADR. Asp-110 (proton acceptor) is an active-site residue. Residue Asp-130 coordinates K(+). Position 133 (Thr-133) interacts with ATP. Thr-187 is a substrate binding site.

Belongs to the type III pantothenate kinase family. As to quaternary structure, homodimer. The cofactor is NH4(+). Requires K(+) as cofactor.

It is found in the cytoplasm. It carries out the reaction (R)-pantothenate + ATP = (R)-4'-phosphopantothenate + ADP + H(+). The protein operates within cofactor biosynthesis; coenzyme A biosynthesis; CoA from (R)-pantothenate: step 1/5. Its function is as follows. Catalyzes the phosphorylation of pantothenate (Pan), the first step in CoA biosynthesis. The sequence is that of Type III pantothenate kinase from Caulobacter vibrioides (strain ATCC 19089 / CIP 103742 / CB 15) (Caulobacter crescentus).